Consider the following 94-residue polypeptide: Large ribosomal subunit protein bL27 (94 aa).

Positions 1–9 are excised as a propeptide; it reads MLELNLQLF. The segment at 12 to 33 is disordered; the sequence is KKGGGSTSNGRDSQAKRLGAKA.

Belongs to the bacterial ribosomal protein bL27 family. In terms of processing, the N-terminus is cleaved by ribosomal processing cysteine protease Prp.

This chain is Large ribosomal subunit protein bL27, found in Lactococcus lactis subsp. cremoris (strain MG1363).